A 369-amino-acid chain; its full sequence is Uroporphyrinogen decarboxylase (369 aa).

Residues 36–40 (RQAGR), Asp86, Tyr162, Ser217, and His342 each bind substrate.

Belongs to the uroporphyrinogen decarboxylase family. As to quaternary structure, homodimer.

It localises to the cytoplasm. It catalyses the reaction uroporphyrinogen III + 4 H(+) = coproporphyrinogen III + 4 CO2. The protein operates within porphyrin-containing compound metabolism; protoporphyrin-IX biosynthesis; coproporphyrinogen-III from 5-aminolevulinate: step 4/4. Catalyzes the decarboxylation of four acetate groups of uroporphyrinogen-III to yield coproporphyrinogen-III. In Albidiferax ferrireducens (strain ATCC BAA-621 / DSM 15236 / T118) (Rhodoferax ferrireducens), this protein is Uroporphyrinogen decarboxylase.